The primary structure comprises 422 residues: Trigger factor (422 aa).

Residues 158 to 242 (GDFAVVSLES…VKGLRKKELP (85 aa)) form the PPIase FKBP-type domain.

This sequence belongs to the FKBP-type PPIase family. Tig subfamily.

The protein localises to the cytoplasm. The catalysed reaction is [protein]-peptidylproline (omega=180) = [protein]-peptidylproline (omega=0). Involved in protein export. Acts as a chaperone by maintaining the newly synthesized protein in an open conformation. Functions as a peptidyl-prolyl cis-trans isomerase. The protein is Trigger factor of Solibacter usitatus (strain Ellin6076).